The chain runs to 410 residues: Peptidase T (410 aa).

His-79 contributes to the Zn(2+) binding site. Residue Asp-81 is part of the active site. Residue Asp-142 participates in Zn(2+) binding. The Proton acceptor role is filled by Glu-176. Positions 177, 199, and 381 each coordinate Zn(2+).

This sequence belongs to the peptidase M20B family. The cofactor is Zn(2+).

It is found in the cytoplasm. It carries out the reaction Release of the N-terminal residue from a tripeptide.. In terms of biological role, cleaves the N-terminal amino acid of tripeptides. In Bacillus licheniformis (strain ATCC 14580 / DSM 13 / JCM 2505 / CCUG 7422 / NBRC 12200 / NCIMB 9375 / NCTC 10341 / NRRL NRS-1264 / Gibson 46), this protein is Peptidase T.